The chain runs to 248 residues: UPF0173 metal-dependent hydrolase Hlac_1347 (248 aa).

This sequence belongs to the UPF0173 family.

The protein is UPF0173 metal-dependent hydrolase Hlac_1347 of Halorubrum lacusprofundi (strain ATCC 49239 / DSM 5036 / JCM 8891 / ACAM 34).